The primary structure comprises 203 residues: Large ribosomal subunit protein uL13 (203 aa).

Ala-2 is modified (N-acetylalanine). Arg-59 is modified (citrulline). Ser-77 is modified (phosphoserine; by ZIPK/DAPK3). Arg-140 carries the post-translational modification Citrulline. The residue at position 191 (Lys-191) is an N6-acetyllysine.

This sequence belongs to the universal ribosomal protein uL13 family. As to quaternary structure, component of the 60S ribosome. Component of the GAIT complex. Interacts with EIF4G1. Phosphorylation at Ser-77 upon interferon-gamma treatment in macrophages involves a DAPK1-DAPK3 kinase cascade and is causing release from the ribosome, association with the GAIT complex and subsequent involvement in transcript-selective translation inhibition. In terms of processing, citrullinated by PADI4.

The protein resides in the cytoplasm. In terms of biological role, associated with ribosomes but is not required for canonical ribosome function and has extra-ribosomal functions. Component of the GAIT (gamma interferon-activated inhibitor of translation) complex which mediates interferon-gamma-induced transcript-selective translation inhibition in inflammation processes. Upon interferon-gamma activation and subsequent phosphorylation dissociates from the ribosome and assembles into the GAIT complex which binds to stem loop-containing GAIT elements in the 3'-UTR of diverse inflammatory mRNAs (such as ceruplasmin) and suppresses their translation. In the GAIT complex interacts with m7G cap-bound eIF4G at or near the eIF3-binding site and blocks the recruitment of the 43S ribosomal complex. Involved in methylation of rRNA. The sequence is that of Large ribosomal subunit protein uL13 (Rpl13a) from Mus musculus (Mouse).